The chain runs to 395 residues: Elongation factor Tu (395 aa).

The tr-type G domain occupies 10-204 (KTHANIGTIG…AVDSYIPTPE (195 aa)). The interval 19-26 (GHVDHGKT) is G1. Residue 19-26 (GHVDHGKT) coordinates GTP. Position 26 (T26) interacts with Mg(2+). Residues 60–64 (GITIN) are G2. Positions 81–84 (DCPG) are G3. GTP-binding positions include 81–85 (DCPGH) and 136–139 (NKCD). The interval 136-139 (NKCD) is G4. Residues 174 to 176 (SAL) are G5.

Belongs to the TRAFAC class translation factor GTPase superfamily. Classic translation factor GTPase family. EF-Tu/EF-1A subfamily. Monomer.

It is found in the cytoplasm. The catalysed reaction is GTP + H2O = GDP + phosphate + H(+). GTP hydrolase that promotes the GTP-dependent binding of aminoacyl-tRNA to the A-site of ribosomes during protein biosynthesis. The sequence is that of Elongation factor Tu from Lysinibacillus sphaericus (strain C3-41).